Reading from the N-terminus, the 152-residue chain is Superoxide dismutase [Cu-Zn] (152 aa).

Cu cation contacts are provided by H45, H47, and H62. C56 and C145 are disulfide-bonded. Zn(2+)-binding residues include H62, H70, H79, and D82. Cu cation is bound at residue H119.

Belongs to the Cu-Zn superoxide dismutase family. As to quaternary structure, homodimer. It depends on Cu cation as a cofactor. Requires Zn(2+) as cofactor.

The protein localises to the cytoplasm. The enzyme catalyses 2 superoxide + 2 H(+) = H2O2 + O2. Its function is as follows. Destroys radicals which are normally produced within the cells and which are toxic to biological systems. This Panax ginseng (Korean ginseng) protein is Superoxide dismutase [Cu-Zn] (SODCC).